The primary structure comprises 143 residues: uncharacterized protein (143 aa).

Residues Met1–Ala143 form a disordered region. Composition is skewed to basic and acidic residues over residues Ile34–Asp46 and Glu61–Val76. 2 stretches are compositionally biased toward acidic residues: residues Asp77–Glu93 and Tyr103–Ala115.

This is an uncharacterized protein from Bacillus subtilis (strain 168).